Here is a 377-residue protein sequence, read N- to C-terminus: Alanine racemase (377 aa).

The active-site Proton acceptor; specific for D-alanine is lysine 37. Lysine 37 bears the N6-(pyridoxal phosphate)lysine mark. Residue arginine 135 coordinates substrate. Residue tyrosine 271 is the Proton acceptor; specific for L-alanine of the active site. Methionine 319 is a binding site for substrate.

This sequence belongs to the alanine racemase family. Requires pyridoxal 5'-phosphate as cofactor.

It catalyses the reaction L-alanine = D-alanine. It participates in amino-acid biosynthesis; D-alanine biosynthesis; D-alanine from L-alanine: step 1/1. Catalyzes the interconversion of L-alanine and D-alanine. May also act on other amino acids. The polypeptide is Alanine racemase (alr) (Helicobacter pylori (strain J99 / ATCC 700824) (Campylobacter pylori J99)).